The primary structure comprises 401 residues: Dynactin subunit 2 (401 aa).

The segment at 1–25 (MADPKYADLPGIARNEPDVYETSDL) is disordered. Alanine 2 carries the N-acetylalanine modification. Residue tyrosine 6 is modified to Phosphotyrosine. Serine 83 is subject to Phosphoserine. Tyrosine 86 carries the phosphotyrosine modification. Residues 99-132 (PQQKYQRLLHEVQELTTEVEKIKTTVKESATEEK) are a coiled coil. A phosphothreonine mark is found at threonine 134 and threonine 198. Residues 214–244 (EQDKFSQAAKVAELEKRLTELETAVRCDQDA) are a coiled coil. A Phosphoserine modification is found at serine 320. Positions 379 to 399 (RENLATVEGNFASIDERMKKL) form a coiled coil.

This sequence belongs to the dynactin subunit 2 family. As to quaternary structure, subunit of dynactin, a multiprotein complex part of a tripartite complex with dynein and a adapter, such as BICDL1, BICD2 or HOOK3. The dynactin complex is built around ACTR1A/ACTB filament and consists of an actin-related filament composed of a shoulder domain, a pointed end and a barbed end. Its length is defined by its flexible shoulder domain. The soulder is composed of 2 DCTN1 subunits, 4 DCTN2 and 2 DCTN3. The 4 DCNT2 (via N-terminus) bind the ACTR1A filament and act as molecular rulers to determine the length. The pointed end is important for binding dynein-dynactin cargo adapters and consists of 4 subunits: ACTR10, DCNT4, DCTN5 and DCTN6. The barbed end is composed of a CAPZA1:CAPZB heterodimers, which binds ACTR1A/ACTB filament and dynactin and stabilizes dynactin. Interacts with BICD2 and CEP135. Interacts with DYNAP. Interacts with ECPAS. Interacts with MAPRE1.

The protein localises to the cytoplasm. The protein resides in the cytoskeleton. It is found in the microtubule organizing center. It localises to the centrosome. Its subcellular location is the membrane. In terms of biological role, part of the dynactin complex that activates the molecular motor dynein for ultra-processive transport along microtubules. In the dynactin soulder domain, binds the ACTR1A filament and acts as a molecular ruler to determine the length. Modulates cytoplasmic dynein binding to an organelle, and plays a role in prometaphase chromosome alignment and spindle organization during mitosis. Involved in anchoring microtubules to centrosomes. May play a role in synapse formation during brain development. In Homo sapiens (Human), this protein is Dynactin subunit 2.